The chain runs to 691 residues: Glycine--tRNA ligase beta subunit (691 aa).

Belongs to the class-II aminoacyl-tRNA synthetase family. As to quaternary structure, tetramer of two alpha and two beta subunits.

Its subcellular location is the cytoplasm. The enzyme catalyses tRNA(Gly) + glycine + ATP = glycyl-tRNA(Gly) + AMP + diphosphate. The polypeptide is Glycine--tRNA ligase beta subunit (Limosilactobacillus reuteri (strain DSM 20016) (Lactobacillus reuteri)).